Here is a 454-residue protein sequence, read N- to C-terminus: tRNA modification GTPase MnmE (454 aa).

Residues Arg26, Glu84, and Lys123 each coordinate (6S)-5-formyl-5,6,7,8-tetrahydrofolate. Residues 219–378 (GLQVVIAGKP…LVDAITAHAG (160 aa)) form the TrmE-type G domain. Residue Asn229 coordinates K(+). GTP-binding positions include 229 to 234 (NAGKSS), 248 to 254 (TDIAGTT), and 273 to 276 (DTAG). A Mg(2+)-binding site is contributed by Ser233. K(+)-binding residues include Thr248, Ile250, and Thr253. Thr254 provides a ligand contact to Mg(2+). Residue Lys454 coordinates (6S)-5-formyl-5,6,7,8-tetrahydrofolate.

Belongs to the TRAFAC class TrmE-Era-EngA-EngB-Septin-like GTPase superfamily. TrmE GTPase family. In terms of assembly, homodimer. Heterotetramer of two MnmE and two MnmG subunits. The cofactor is K(+).

Its subcellular location is the cytoplasm. Functionally, exhibits a very high intrinsic GTPase hydrolysis rate. Involved in the addition of a carboxymethylaminomethyl (cmnm) group at the wobble position (U34) of certain tRNAs, forming tRNA-cmnm(5)s(2)U34. The chain is tRNA modification GTPase MnmE from Acinetobacter baumannii (strain ATCC 17978 / DSM 105126 / CIP 53.77 / LMG 1025 / NCDC KC755 / 5377).